A 380-amino-acid chain; its full sequence is Protein RecA (380 aa).

Gly65–Thr72 contacts ATP. The interval Asp329 to Lys380 is disordered. Positions Asp340–Thr350 are enriched in basic and acidic residues. Positions Lys352 to Ala364 are enriched in polar residues.

Belongs to the RecA family.

The protein resides in the cytoplasm. In terms of biological role, can catalyze the hydrolysis of ATP in the presence of single-stranded DNA, the ATP-dependent uptake of single-stranded DNA by duplex DNA, and the ATP-dependent hybridization of homologous single-stranded DNAs. It interacts with LexA causing its activation and leading to its autocatalytic cleavage. The sequence is that of Protein RecA from Lactiplantibacillus plantarum (strain ATCC BAA-793 / NCIMB 8826 / WCFS1) (Lactobacillus plantarum).